A 395-amino-acid chain; its full sequence is NAD(P)H-quinone oxidoreductase subunit H, chloroplastic (395 aa).

This sequence belongs to the complex I 49 kDa subunit family. In terms of assembly, NDH is composed of at least 16 different subunits, 5 of which are encoded in the nucleus.

The protein localises to the plastid. The protein resides in the chloroplast thylakoid membrane. The enzyme catalyses a plastoquinone + NADH + (n+1) H(+)(in) = a plastoquinol + NAD(+) + n H(+)(out). The catalysed reaction is a plastoquinone + NADPH + (n+1) H(+)(in) = a plastoquinol + NADP(+) + n H(+)(out). NDH shuttles electrons from NAD(P)H:plastoquinone, via FMN and iron-sulfur (Fe-S) centers, to quinones in the photosynthetic chain and possibly in a chloroplast respiratory chain. The immediate electron acceptor for the enzyme in this species is believed to be plastoquinone. Couples the redox reaction to proton translocation, and thus conserves the redox energy in a proton gradient. The protein is NAD(P)H-quinone oxidoreductase subunit H, chloroplastic of Coffea arabica (Arabian coffee).